The chain runs to 382 residues: Acetylornithine deacetylase (382 aa).

H79 serves as a coordination point for Zn(2+). D81 is a catalytic residue. D111 contacts Zn(2+). The active site involves E143. E144, E168, and H354 together coordinate Zn(2+).

Belongs to the peptidase M20A family. ArgE subfamily. In terms of assembly, homodimer. Zn(2+) is required as a cofactor. It depends on Co(2+) as a cofactor. Glutathione serves as cofactor.

Its subcellular location is the cytoplasm. It catalyses the reaction N(2)-acetyl-L-ornithine + H2O = L-ornithine + acetate. It participates in amino-acid biosynthesis; L-arginine biosynthesis; L-ornithine from N(2)-acetyl-L-ornithine (linear): step 1/1. Functionally, catalyzes the hydrolysis of the amide bond of N(2)-acetylated L-amino acids. Cleaves the acetyl group from N-acetyl-L-ornithine to form L-ornithine, an intermediate in L-arginine biosynthesis pathway, and a branchpoint in the synthesis of polyamines. The polypeptide is Acetylornithine deacetylase (Pasteurella multocida (strain Pm70)).